Consider the following 355-residue polypeptide: Peptide chain release factor 1 (355 aa).

N5-methylglutamine is present on glutamine 233. The span at arginine 282–arginine 293 shows a compositional bias: basic and acidic residues. Residues arginine 282 to isoleucine 305 form a disordered region.

It belongs to the prokaryotic/mitochondrial release factor family. In terms of processing, methylated by PrmC. Methylation increases the termination efficiency of RF1.

It localises to the cytoplasm. Functionally, peptide chain release factor 1 directs the termination of translation in response to the peptide chain termination codons UAG and UAA. The polypeptide is Peptide chain release factor 1 (Rickettsia rickettsii (strain Iowa)).